The following is a 114-amino-acid chain: NADH-ubiquinone oxidoreductase chain 3 (114 aa).

The next 3 membrane-spanning stretches (helical) occupy residues 3 to 23 (ATILMIAMTLSTILAILSFWL), 54 to 74 (FFLIAILFLLFDLEIALLLPF), and 85 to 105 (IVILWAALILTLLTLGLIYEW).

It belongs to the complex I subunit 3 family.

The protein localises to the mitochondrion membrane. It catalyses the reaction a ubiquinone + NADH + 5 H(+)(in) = a ubiquinol + NAD(+) + 4 H(+)(out). Core subunit of the mitochondrial membrane respiratory chain NADH dehydrogenase (Complex I) that is believed to belong to the minimal assembly required for catalysis. Complex I functions in the transfer of electrons from NADH to the respiratory chain. The immediate electron acceptor for the enzyme is believed to be ubiquinone. The sequence is that of NADH-ubiquinone oxidoreductase chain 3 (mt-nd3) from Xenopus laevis (African clawed frog).